Here is a 92-residue protein sequence, read N- to C-terminus: Small ribosomal subunit protein uS17 (92 aa).

The protein belongs to the universal ribosomal protein uS17 family. In terms of assembly, part of the 30S ribosomal subunit.

Its function is as follows. One of the primary rRNA binding proteins, it binds specifically to the 5'-end of 16S ribosomal RNA. This Cupriavidus metallidurans (strain ATCC 43123 / DSM 2839 / NBRC 102507 / CH34) (Ralstonia metallidurans) protein is Small ribosomal subunit protein uS17.